The sequence spans 71 residues: Defensin-like protein 124 (71 aa).

A signal peptide spans 1–25; the sequence is MSKPTVIVIFMAILVLGMATKETQG. Cystine bridges form between C28–C71, C40–C60, C45–C65, and C49–C67.

The protein belongs to the DEFL family.

The protein localises to the secreted. The sequence is that of Defensin-like protein 124 (LCR16) from Arabidopsis thaliana (Mouse-ear cress).